A 214-amino-acid chain; its full sequence is Small ribosomal subunit protein uS3 (214 aa).

The 69-residue stretch at 39-107 folds into the KH type-2 domain; sequence IRAYLLKKPA…EVWVAVEEVK (69 aa).

Belongs to the universal ribosomal protein uS3 family. In terms of assembly, part of the 30S ribosomal subunit. Forms a tight complex with proteins S10 and S14.

Functionally, binds the lower part of the 30S subunit head. Binds mRNA in the 70S ribosome, positioning it for translation. In Protochlamydia amoebophila (strain UWE25), this protein is Small ribosomal subunit protein uS3.